The sequence spans 437 residues: Purple acid phosphatase 18 (437 aa).

An N-terminal signal peptide occupies residues 1–23 (MEKWGILLLVTLSVSIIFTSAAA). Fe cation is bound by residues D148, D175, and Y178. Zn(2+) is bound at residue D175. Zn(2+)-binding residues include N208 and H291. N208 provides a ligand contact to substrate. The active-site Proton donor is the H301. H328 provides a ligand contact to Zn(2+). Residue 328–330 (HVH) participates in substrate binding. Position 330 (H330) interacts with Fe cation. N390 carries N-linked (GlcNAc...) asparagine glycosylation.

Belongs to the metallophosphoesterase superfamily. Purple acid phosphatase family. Homodimer. The cofactor is Fe cation. Zn(2+) serves as cofactor. Expressed in roots, stems, leaves, flowers and siliques.

It is found in the secreted. It carries out the reaction a phosphate monoester + H2O = an alcohol + phosphate. The polypeptide is Purple acid phosphatase 18 (PAP18) (Arabidopsis thaliana (Mouse-ear cress)).